The following is a 420-amino-acid chain: Serine hydroxymethyltransferase (420 aa).

Residues L121 and 125–127 (GHL) contribute to the (6S)-5,6,7,8-tetrahydrofolate site. N6-(pyridoxal phosphate)lysine is present on K229.

Belongs to the SHMT family. As to quaternary structure, homodimer. It depends on pyridoxal 5'-phosphate as a cofactor.

The protein resides in the cytoplasm. It carries out the reaction (6R)-5,10-methylene-5,6,7,8-tetrahydrofolate + glycine + H2O = (6S)-5,6,7,8-tetrahydrofolate + L-serine. It functions in the pathway one-carbon metabolism; tetrahydrofolate interconversion. It participates in amino-acid biosynthesis; glycine biosynthesis; glycine from L-serine: step 1/1. Its function is as follows. Catalyzes the reversible interconversion of serine and glycine with tetrahydrofolate (THF) serving as the one-carbon carrier. This reaction serves as the major source of one-carbon groups required for the biosynthesis of purines, thymidylate, methionine, and other important biomolecules. Also exhibits THF-independent aldolase activity toward beta-hydroxyamino acids, producing glycine and aldehydes, via a retro-aldol mechanism. This chain is Serine hydroxymethyltransferase, found in Aggregatibacter actinomycetemcomitans (Actinobacillus actinomycetemcomitans).